A 224-amino-acid polypeptide reads, in one-letter code: Thiamine-triphosphatase (224 aa).

At A2 the chain carries N-acetylalanine. One can recognise a CYTH domain in the interval 5–201 (LIEVERKFAP…AKLMVYLQRF (197 aa)). Positions 7 and 9 each coordinate Mg(2+). K11, R55, R57, K65, and R125 together coordinate substrate. Residues D145, E157, and E159 each coordinate Mg(2+). Residue E157 participates in substrate binding. K193 serves as a coordination point for substrate.

This sequence belongs to the ThTPase family. Monomer. Mg(2+) serves as cofactor.

The protein localises to the cytoplasm. The catalysed reaction is thiamine triphosphate + H2O = thiamine diphosphate + phosphate + H(+). Hydrolase highly specific for thiamine triphosphate (ThTP). This Mus musculus (Mouse) protein is Thiamine-triphosphatase (Thtpa).